The chain runs to 596 residues: Aspartic proteinase MKC7 (596 aa).

Residues 1-22 (MKLSVLTFVVDALLVCSSIVDA) form the signal peptide. The propeptide occupies 23-65 (GVTDFPSLPSNEVYVKMNFQKKYGSSFENALDDTKGRTRLMTR). A Peptidase A1 domain is found at 81-468 (YSVELDIGTP…DLDNMEISMA (388 aa)). The active site involves aspartate 99. N-linked (GlcNAc...) asparagine glycans are attached at residues asparagine 180, asparagine 190, asparagine 219, asparagine 229, asparagine 232, asparagine 286, and asparagine 346. Aspartate 360 is an active-site residue. Asparagine 471 and asparagine 517 each carry an N-linked (GlcNAc...) asparagine glycan. Residues 530-570 (ATSSSSSKGQKTQTSTTALSISKSTSSTSSTGMLSPTSSSS) are compositionally biased toward low complexity. The tract at residues 530–578 (ATSSSSSKGQKTQTSTTALSISKSTSSTSSTGMLSPTSSSSTRKENGGH) is disordered. Asparagine 575 carries GPI-anchor amidated asparagine lipidation. The propeptide at 576-596 (GGHNLNPPFFARFITAIFHHI) is removed in mature form.

The protein belongs to the peptidase A1 family.

The protein localises to the cell membrane. It carries out the reaction Hydrolyzes various precursor proteins with Arg or Lys in P1, and commonly Arg or Lys also in P2. The P3 amino acid is usually non-polar, but otherwise additional basic amino acids are favorable in both non-prime and prime positions.. Functionally, cleaves proteins C-terminally to the most C-terminal basic residue. Can process the alpha-mating factor precursor. Required for cell wall integrity. This chain is Aspartic proteinase MKC7 (MKC7), found in Saccharomyces cerevisiae (strain ATCC 204508 / S288c) (Baker's yeast).